The chain runs to 487 residues: Acetyl-coenzyme A carboxylase carboxyl transferase subunit beta, chloroplastic (487 aa).

The CoA carboxyltransferase N-terminal domain maps to 223–487; the sequence is LWIQCDNCYG…FCPLNKTEIK (265 aa). 4 residues coordinate Zn(2+): cysteine 227, cysteine 230, cysteine 243, and cysteine 246. Residues 227 to 246 form a C4-type zinc finger; the sequence is CDNCYGLMYKKVKMNVCEQC.

It belongs to the AccD/PCCB family. As to quaternary structure, acetyl-CoA carboxylase is a heterohexamer composed of biotin carboxyl carrier protein, biotin carboxylase and 2 subunits each of ACCase subunit alpha and ACCase plastid-coded subunit beta (accD). Zn(2+) serves as cofactor.

It localises to the plastid. The protein resides in the chloroplast stroma. The catalysed reaction is N(6)-carboxybiotinyl-L-lysyl-[protein] + acetyl-CoA = N(6)-biotinyl-L-lysyl-[protein] + malonyl-CoA. Its pathway is lipid metabolism; malonyl-CoA biosynthesis; malonyl-CoA from acetyl-CoA: step 1/1. Component of the acetyl coenzyme A carboxylase (ACC) complex. Biotin carboxylase (BC) catalyzes the carboxylation of biotin on its carrier protein (BCCP) and then the CO(2) group is transferred by the transcarboxylase to acetyl-CoA to form malonyl-CoA. This chain is Acetyl-coenzyme A carboxylase carboxyl transferase subunit beta, chloroplastic, found in Nasturtium officinale (Watercress).